Here is an 897-residue protein sequence, read N- to C-terminus: Translation initiation factor IF-2 (897 aa).

In terms of domain architecture, tr-type G spans 402 to 570 (NRAPIVTIMG…SILVQSEILE (169 aa)). The segment at 411–418 (GHVDHGKT) is G1. A GTP-binding site is contributed by 411–418 (GHVDHGKT). The tract at residues 436-440 (GITQN) is G2. The tract at residues 458-461 (DTPG) is G3. GTP contacts are provided by residues 458–462 (DTPGH) and 512–515 (NKID). The G4 stretch occupies residues 512-515 (NKID). Residues 548 to 550 (SAV) are G5.

The protein belongs to the TRAFAC class translation factor GTPase superfamily. Classic translation factor GTPase family. IF-2 subfamily.

The protein resides in the cytoplasm. One of the essential components for the initiation of protein synthesis. Protects formylmethionyl-tRNA from spontaneous hydrolysis and promotes its binding to the 30S ribosomal subunits. Also involved in the hydrolysis of GTP during the formation of the 70S ribosomal complex. This is Translation initiation factor IF-2 from Blochmanniella floridana.